The following is a 314-amino-acid chain: DNA-directed RNA polymerase subunit alpha (314 aa).

Positions 1–228 (MIEIEKPRIE…EHLNIFVGLT (228 aa)) are alpha N-terminal domain (alpha-NTD). Residues 245–314 (KEKVLEMSIE…DLGLGLRKED (70 aa)) are alpha C-terminal domain (alpha-CTD).

The protein belongs to the RNA polymerase alpha chain family. In terms of assembly, homodimer. The RNAP catalytic core consists of 2 alpha, 1 beta, 1 beta' and 1 omega subunit. When a sigma factor is associated with the core the holoenzyme is formed, which can initiate transcription.

The enzyme catalyses RNA(n) + a ribonucleoside 5'-triphosphate = RNA(n+1) + diphosphate. Its function is as follows. DNA-dependent RNA polymerase catalyzes the transcription of DNA into RNA using the four ribonucleoside triphosphates as substrates. The chain is DNA-directed RNA polymerase subunit alpha from Staphylococcus saprophyticus subsp. saprophyticus (strain ATCC 15305 / DSM 20229 / NCIMB 8711 / NCTC 7292 / S-41).